The chain runs to 127 residues: Small ribosomal subunit protein eS8 (127 aa).

The tract at residues methionine 1–lysine 24 is disordered.

This sequence belongs to the eukaryotic ribosomal protein eS8 family. In terms of assembly, part of the 30S ribosomal subunit.

This chain is Small ribosomal subunit protein eS8, found in Methanothrix thermoacetophila (strain DSM 6194 / JCM 14653 / NBRC 101360 / PT) (Methanosaeta thermophila).